Here is a 192-residue protein sequence, read N- to C-terminus: Secreted and transmembrane protein 1A (192 aa).

A signal peptide spans methionine 1–alanine 27. Residues glutamine 28–threonine 165 are Extracellular-facing. Asparagine 29, asparagine 55, asparagine 84, and asparagine 127 each carry an N-linked (GlcNAc...) asparagine glycan. Residues leucine 166 to tyrosine 186 traverse the membrane as a helical segment. Over tyrosine 187–serine 192 the chain is Cytoplasmic.

This sequence belongs to the SECTM family.

Its subcellular location is the cell membrane. It is found in the secreted. In Mus musculus (Mouse), this protein is Secreted and transmembrane protein 1A.